The sequence spans 2801 residues: Neurobeachin-like protein 2 (2801 aa).

The disordered stretch occupies residues 1379–1529 (RHEEEYEEEE…TISNTSNPQA (151 aa)). Positions 1383–1393 (EYEEEEGETQD) are enriched in acidic residues. Polar residues-rich tracts occupy residues 1400-1413 (DLSQSPPSTGQLKN), 1424-1437 (GDQSSHSSTLSNTV), 1470-1481 (KGPQTPVGSQPE), and 1500-1528 (SSSLSNVLDDTSYSTEPPTDTISNTSNPQ). Residues 1986–2086 (SQKEKLVLSE…VRNKVYSRIL (101 aa)) enclose the BEACH-type PH domain. The BEACH domain maps to 2099 to 2391 (RSPQELLKAS…QLLKEPHPPR (293 aa)). 7 WD repeats span residues 2431 to 2468 (LVQAVVPRNQTRSFIIPGSDILVTVSANGMIGTHSWLP), 2492 to 2535 (RFLS…MLGK), 2538 to 2575 (LVGRICRHIDVVTCLALDLCGIYLISGSRDTTCMVWQV), 2588 to 2626 (RPIQVLCGHDQEVTCVAISTELDMAISGSKDGTVIVHSV), 2633 to 2676 (WTLR…RYAL), 2684 to 2719 (TLLASETLDEKISALYLVPDYLIVGTQQGNLHIRDL), and 2727 to 2762 (APLALKVPVRCVSVTKESSHILVGLEDGKLIVVGAG).

It belongs to the WD repeat neurobeachin family.

Its subcellular location is the endoplasmic reticulum. In terms of biological role, involved in thrombopoiesis. Plays a role in the development or secretion of alpha-granules, that contain several growth factors important for platelet biogenesis. In Danio rerio (Zebrafish), this protein is Neurobeachin-like protein 2 (nbeal2).